Here is a 382-residue protein sequence, read N- to C-terminus: Succinate--CoA ligase [ADP-forming] subunit beta (382 aa).

In terms of domain architecture, ATP-grasp spans 9 to 237 (KQVFADAGIP…AAEGDELEQK (229 aa)). ATP contacts are provided by residues Lys45, 52–54 (GRG), Glu91, Val94, and Glu99. Mg(2+) contacts are provided by Asn191 and Asp205. Substrate is bound by residues Asn257 and 314–316 (GIT).

The protein belongs to the succinate/malate CoA ligase beta subunit family. In terms of assembly, heterotetramer of two alpha and two beta subunits. Mg(2+) serves as cofactor.

The enzyme catalyses succinate + ATP + CoA = succinyl-CoA + ADP + phosphate. It carries out the reaction GTP + succinate + CoA = succinyl-CoA + GDP + phosphate. It participates in carbohydrate metabolism; tricarboxylic acid cycle; succinate from succinyl-CoA (ligase route): step 1/1. Functionally, succinyl-CoA synthetase functions in the citric acid cycle (TCA), coupling the hydrolysis of succinyl-CoA to the synthesis of either ATP or GTP and thus represents the only step of substrate-level phosphorylation in the TCA. The beta subunit provides nucleotide specificity of the enzyme and binds the substrate succinate, while the binding sites for coenzyme A and phosphate are found in the alpha subunit. This is Succinate--CoA ligase [ADP-forming] subunit beta from Haloarcula marismortui (strain ATCC 43049 / DSM 3752 / JCM 8966 / VKM B-1809) (Halobacterium marismortui).